The chain runs to 125 residues: Small ribosomal subunit protein uS13 (125 aa).

This sequence belongs to the universal ribosomal protein uS13 family. As to quaternary structure, part of the 30S ribosomal subunit. Forms a loose heterodimer with protein S19. Forms two bridges to the 50S subunit in the 70S ribosome.

Located at the top of the head of the 30S subunit, it contacts several helices of the 16S rRNA. In the 70S ribosome it contacts the 23S rRNA (bridge B1a) and protein L5 of the 50S subunit (bridge B1b), connecting the 2 subunits; these bridges are implicated in subunit movement. Contacts the tRNAs in the A and P-sites. The chain is Small ribosomal subunit protein uS13 from Rickettsia bellii (strain OSU 85-389).